A 239-amino-acid polypeptide reads, in one-letter code: Ribosomal RNA small subunit methyltransferase G (239 aa).

S-adenosyl-L-methionine-binding positions include Gly77, Phe82, 128–129 (AE), and Arg147.

The protein belongs to the methyltransferase superfamily. RNA methyltransferase RsmG family.

It localises to the cytoplasm. In terms of biological role, specifically methylates the N7 position of guanine in position 535 of 16S rRNA. The protein is Ribosomal RNA small subunit methyltransferase G of Bacillus cereus (strain ZK / E33L).